A 705-amino-acid polypeptide reads, in one-letter code: Elongation factor G (705 aa).

The tr-type G domain maps to 8–290 (HRYRNIGIMA…GVIHLLPSPA (283 aa)). Residues 17–24 (AHIDAGKT), 88–92 (DTPGH), and 142–145 (NKMD) each bind GTP.

Belongs to the TRAFAC class translation factor GTPase superfamily. Classic translation factor GTPase family. EF-G/EF-2 subfamily.

The protein localises to the cytoplasm. Functionally, catalyzes the GTP-dependent ribosomal translocation step during translation elongation. During this step, the ribosome changes from the pre-translocational (PRE) to the post-translocational (POST) state as the newly formed A-site-bound peptidyl-tRNA and P-site-bound deacylated tRNA move to the P and E sites, respectively. Catalyzes the coordinated movement of the two tRNA molecules, the mRNA and conformational changes in the ribosome. The polypeptide is Elongation factor G (Xylella fastidiosa (strain M12)).